The chain runs to 252 residues: Short chain dehydrogenase andC (252 aa).

The first 25 residues, 1–25, serve as a signal peptide directing secretion; that stretch reads MGFLQDKVVIITGAAAGIGLATATA. NADP(+) contacts are provided by Ile11, Asp57, and Arg119. Ser137 functions as the Proton donor in the catalytic mechanism. NADP(+)-binding residues include Tyr151 and Lys155. Tyr151 serves as the catalytic Proton acceptor. Residue Lys155 is the Lowers pKa of active site Tyr of the active site.

Belongs to the short-chain dehydrogenases/reductases (SDR) family.

It participates in secondary metabolite biosynthesis; terpenoid biosynthesis. Short chain dehydrogenase; part of the gene cluster that mediates the biosynthesis of anditomin, a fungal meroterpenoid. The first step of the pathway is the synthesis of 3,5-dimethylorsellinic acid (DMOA) by the polyketide synthase andM. DMOA is then converted to the phthalide compound 5,7-dihydroxy-4,6-dimethylphthalide (DHDMP) by the cytochrome P450 monooxygenase andK, which is further prenylated by the prenyltransferase andD to yield farnesyl-DHDMP. Further epoxidation by the FAD-dependent monooxygenase andE leads to epoxyfarnesyl-DHDMP. The next step involves the terpene cyclase andB that converts epoxyfarnesyl-DHDMP into preandiloid A through opening of the epoxide ring followed by the cyclization of the farnesyl moiety. Preandiloid A is in turn oxidized at the C-3 hydroxyl group to yield preandiloid B by the dehydrogenase andC. The dioxygenase andA is solely responsible for the dehydrogenation of preandiloid B leading to the enone preandiloid C, as well as for the intriguing structural rearrangement to generate the bicyclo[2.2.2]octane core, transforming preandiloid C into andiconin. FAD-binding monooxygenase andJ then produces andilesin D which is reduced by dehydrogenase andI to yield andilesin A. Action of acetyltransferase andG followed by a spontaneous acetate elimination leads then to andilesin B, which is in turn substrate of the short chain dehydrogenase andH to yield andilesin C. Finally, the dioxygenase andF catalyzes the transformation of andilesin C to anditomin. The sequence is that of Short chain dehydrogenase andC from Emericella variicolor (Aspergillus stellatus).